The sequence spans 137 residues: MQQTLSIIKPDAVEKGVIGKIIDRFESAGLRIAAAKKIKLSKCDASQFYAIHKERSFFNDLVDYMTSGPVVVMVLEGENAVAKNRELMGATDPKKAAPGTIRADFAESIDANAVHGSDSEENAKNEIAFFFAGREIC.

ATP-binding residues include K9, F57, R85, T91, R102, and N112. H115 serves as the catalytic Pros-phosphohistidine intermediate.

It belongs to the NDK family. Homotetramer. Mg(2+) is required as a cofactor.

Its subcellular location is the cytoplasm. It catalyses the reaction a 2'-deoxyribonucleoside 5'-diphosphate + ATP = a 2'-deoxyribonucleoside 5'-triphosphate + ADP. The catalysed reaction is a ribonucleoside 5'-diphosphate + ATP = a ribonucleoside 5'-triphosphate + ADP. Its function is as follows. Major role in the synthesis of nucleoside triphosphates other than ATP. The ATP gamma phosphate is transferred to the NDP beta phosphate via a ping-pong mechanism, using a phosphorylated active-site intermediate. This is Nucleoside diphosphate kinase from Campylobacter hominis (strain ATCC BAA-381 / DSM 21671 / CCUG 45161 / LMG 19568 / NCTC 13146 / CH001A).